The sequence spans 184 residues: Probable archaeosortase E (184 aa).

4 consecutive transmembrane segments (helical) span residues 27 to 47 (ILFLIKFYIIFLVVFFILSYF), 86 to 106 (VVEECTGSFLIAGLLALIIVY), 114 to 134 (IIGIFFVLLAFFVNIFRIVLI), and 151 to 171 (IAGYGVILTLVPVLVIGYLKI). Cysteine 90 acts as the Acyl-thioester intermediate in catalysis. Arginine 130 serves as the catalytic Proton donor.

It belongs to the exosortase/archaeosortase family. Archaeosortase E subfamily.

The protein resides in the cell membrane. In terms of biological role, transpeptidase that recognizes and modifies its substrate by proteolytic cleavage of a sorting signal. Following cleavage, a covalent intermediate is formed via a thioester bond between the archaeosortase and its substrate, which is then transferred and covalently attached to the cell membrane. The polypeptide is Probable archaeosortase E (Methanocaldococcus jannaschii (strain ATCC 43067 / DSM 2661 / JAL-1 / JCM 10045 / NBRC 100440) (Methanococcus jannaschii)).